We begin with the raw amino-acid sequence, 311 residues long: Thymidylate synthase (311 aa).

DUMP-binding positions include Arg-28 and 172 to 173; that span reads RR. The Nucleophile role is filled by Cys-192. Residues 213–216, Asn-224, and 254–256 each bind dUMP; these read RSCD and HLY. Asp-216 serves as a coordination point for (6R)-5,10-methylene-5,6,7,8-tetrahydrofolate. Residue Ala-310 participates in (6R)-5,10-methylene-5,6,7,8-tetrahydrofolate binding.

Belongs to the thymidylate synthase family. Bacterial-type ThyA subfamily. As to quaternary structure, homodimer.

Its subcellular location is the cytoplasm. It carries out the reaction dUMP + (6R)-5,10-methylene-5,6,7,8-tetrahydrofolate = 7,8-dihydrofolate + dTMP. The protein operates within pyrimidine metabolism; dTTP biosynthesis. Functionally, catalyzes the reductive methylation of 2'-deoxyuridine-5'-monophosphate (dUMP) to 2'-deoxythymidine-5'-monophosphate (dTMP) while utilizing 5,10-methylenetetrahydrofolate (mTHF) as the methyl donor and reductant in the reaction, yielding dihydrofolate (DHF) as a by-product. This enzymatic reaction provides an intracellular de novo source of dTMP, an essential precursor for DNA biosynthesis. In Sphingopyxis alaskensis (strain DSM 13593 / LMG 18877 / RB2256) (Sphingomonas alaskensis), this protein is Thymidylate synthase.